The primary structure comprises 299 residues: Taste receptor type 2 member 45 (299 aa).

Residue Met1 is a topological domain, extracellular. A helical transmembrane segment spans residues 2-22 (ITFLPIIFSILVVVTFVIGNF). Topologically, residues 23-55 (ANGFIALVNSTEWVKRQKISFADQIVTALAVSR) are cytoplasmic. A helical membrane pass occupies residues 56 to 76 (VGLLWVLLLNWYSTVLNPAFC). Residues 77–98 (SVELRTTAYNIWAVTGHFSNWP) lie on the Extracellular side of the membrane. Residues 99–119 (ATSLSIFYLLKIANFSNLIFL) traverse the membrane as a helical segment. Over 120–126 (RLKRRVK) the chain is Cytoplasmic. A helical transmembrane segment spans residues 127-147 (SVILVVLLGPLLFLACHLFVV). The Extracellular portion of the chain corresponds to 148 to 178 (NMNQIVWTKEYEGNMTWKIKLRRAMYLSDTT). Asn161 carries an N-linked (GlcNAc...) asparagine glycan. The helical transmembrane segment at 179–199 (VTMLANLVPFTVTLISFLLLV) threads the bilayer. Residues 200–229 (CSLCKHLKKMQLHGKGSQDPSTKVHIKVLQ) lie on the Cytoplasmic side of the membrane. A helical membrane pass occupies residues 230-250 (TVISFFLLRAIYFVSVIISVW). At 251 to 259 (SFKNLENKP) the chain is on the extracellular side. A helical membrane pass occupies residues 260 to 280 (VFMFCQAIGFSCSSAHPFILI). The Cytoplasmic portion of the chain corresponds to 281–299 (WGNKKLKQTYLSVLWQMRY).

This sequence belongs to the G-protein coupled receptor T2R family. As to expression, expressed in subsets of taste receptor cells of the tongue and exclusively in gustducin-positive cells.

It is found in the membrane. Its function is as follows. Receptor that may play a role in the perception of bitterness and is gustducin-linked. May play a role in sensing the chemical composition of the gastrointestinal content. The activity of this receptor may stimulate alpha gustducin, mediate PLC-beta-2 activation and lead to the gating of TRPM5. This Homo sapiens (Human) protein is Taste receptor type 2 member 45 (TAS2R45).